The following is a 408-amino-acid chain: CinA-like protein (408 aa).

It belongs to the CinA family.

The protein is CinA-like protein of Thermotoga maritima (strain ATCC 43589 / DSM 3109 / JCM 10099 / NBRC 100826 / MSB8).